Here is a 159-residue protein sequence, read N- to C-terminus: Nucleotide-binding protein PLES_47741 (159 aa).

This sequence belongs to the YajQ family.

Its function is as follows. Nucleotide-binding protein. This is Nucleotide-binding protein PLES_47741 from Pseudomonas aeruginosa (strain LESB58).